A 191-amino-acid chain; its full sequence is Probable rho GDP-dissociation inhibitor (191 aa).

The tract at residues 1 to 22 (MSDHENTGENTSEYQYKQPPQK) is disordered. Over residues 8–21 (GENTSEYQYKQPPQ) the composition is skewed to polar residues.

Belongs to the Rho GDI family.

It localises to the cytoplasm. Regulates the GDP/GTP exchange reaction of the Rho proteins by inhibiting the dissociation of GDP from them, and the subsequent binding of GTP to them. The chain is Probable rho GDP-dissociation inhibitor (rhi-1) from Caenorhabditis elegans.